Reading from the N-terminus, the 251-residue chain is Uridylate kinase (251 aa).

An ATP-binding site is contributed by Lys-19–Gly-22. Gly-61 serves as a coordination point for UMP. ATP contacts are provided by Gly-62 and Arg-66. UMP contacts are provided by residues Asp-81 and Thr-142–Thr-149. Residues Thr-169, Tyr-175, and Asp-178 each contribute to the ATP site.

Belongs to the UMP kinase family. Homohexamer.

The protein resides in the cytoplasm. It catalyses the reaction UMP + ATP = UDP + ADP. Its pathway is pyrimidine metabolism; CTP biosynthesis via de novo pathway; UDP from UMP (UMPK route): step 1/1. Its activity is regulated as follows. Inhibited by UTP. Catalyzes the reversible phosphorylation of UMP to UDP. This is Uridylate kinase from Anaeromyxobacter dehalogenans (strain 2CP-C).